A 389-amino-acid chain; its full sequence is Curcumin synthase 1 (389 aa).

Residue Cys164 is part of the active site.

It belongs to the thiolase-like superfamily. Chalcone/stilbene synthases family. In terms of assembly, homodimer. Expressed in both the leaf and rhizome, with higher expression in the rhizome.

The catalysed reaction is (E)-feruloylacetyl-CoA + (E)-feruloyl-CoA + H2O = curcumin + CO2 + 2 CoA. Its pathway is secondary metabolite biosynthesis; flavonoid biosynthesis. Its function is as follows. Catalyzes the synthesis of curcumin by condensing feruloyl-CoA with a diketide-CoA in the curcuminoid biosynthesis. The chain is Curcumin synthase 1 (CURS1) from Curcuma longa (Turmeric).